Here is a 223-residue protein sequence, read N- to C-terminus: Deoxyribose-phosphate aldolase (223 aa).

The active-site Proton donor/acceptor is the aspartate 89. Catalysis depends on lysine 152, which acts as the Schiff-base intermediate with acetaldehyde. The active-site Proton donor/acceptor is the lysine 181.

Belongs to the DeoC/FbaB aldolase family. DeoC type 1 subfamily.

The protein resides in the cytoplasm. It carries out the reaction 2-deoxy-D-ribose 5-phosphate = D-glyceraldehyde 3-phosphate + acetaldehyde. The protein operates within carbohydrate degradation; 2-deoxy-D-ribose 1-phosphate degradation; D-glyceraldehyde 3-phosphate and acetaldehyde from 2-deoxy-alpha-D-ribose 1-phosphate: step 2/2. In terms of biological role, catalyzes a reversible aldol reaction between acetaldehyde and D-glyceraldehyde 3-phosphate to generate 2-deoxy-D-ribose 5-phosphate. This chain is Deoxyribose-phosphate aldolase, found in Listeria monocytogenes serotype 4b (strain CLIP80459).